We begin with the raw amino-acid sequence, 83 residues long: uncharacterized protein (83 aa).

Residues Ile-50–Ile-70 traverse the membrane as a helical segment.

The protein belongs to the plectrovirus ORF7 family.

It is found in the host membrane. This is an uncharacterized protein from Spiroplasma citri (SpV1).